A 690-amino-acid chain; its full sequence is NF-kappa-B-repressing factor (690 aa).

Positions 1 to 296 are active repression domain; it reads MEKILQMAEG…FKHTFGEDLV (296 aa). The short motif at 25–45 is the Nuclear localization signal element; sequence KPSKGQKRHLSTCDGQNPPKK. Disordered stretches follow at residues 27–87 and 132–163; these read SKGQ…NEQT and MYFD…QTFP. A Glycyl lysine isopeptide (Lys-Gly) (interchain with G-Cter in SUMO2) cross-link involves residue lysine 68. The segment covering 142 to 163 has biased composition (low complexity); that stretch reads STTSQQANSQSTPEPSPSQTFP. The DNA-binding element occupies 296 to 388; it reads VVCQIGMSSY…RVFLQDHCLA (93 aa). A compositionally biased stretch (polar residues) spans 414–431; it reads PTYPSVKSSQCHTGSSPR. The interval 414 to 437 is disordered; the sequence is PTYPSVKSSQCHTGSSPRGSGKKK. A Glycyl lysine isopeptide (Lys-Gly) (interchain with G-Cter in SUMO2) cross-link involves residue lysine 500. The region spanning 551–596 is the G-patch domain; sequence EDNIGNQLLRKMGWTGGGLGKSGEGIREPISVKEQHKREGLGLDVE. The region spanning 600–664 is the R3H domain; that stretch reads KIAKRDIEQI…DRYLVVGRKR (65 aa). Serine 618 carries the post-translational modification Phosphoserine. Glycyl lysine isopeptide (Lys-Gly) (interchain with G-Cter in SUMO2) cross-links involve residues lysine 666 and lysine 674.

Interacts with NF-kappa-B. Interacts with XRN2. Interacts (via G-patch domain) with DHX15; promoting the RNA helicase activity of DHX15. As to expression, widely and constitutively expressed. Expressed at lower level in colon, peripheral blood lymphocytes, lung and kidney.

The protein resides in the nucleus. It localises to the nucleolus. In terms of biological role, enhances the ATPase activity of DHX15 by acting like a brace that tethers mobile sections of DHX15 together, stabilizing a functional conformation with high RNA affinity of DHX15. Involved in the constitutive silencing of the interferon beta promoter, independently of the virus-induced signals, and in the inhibition of the basal and cytokine-induced iNOS promoter activity. Also involved in the regulation of IL-8 transcription. May also act as a DNA-binding transcription regulator: interacts with a specific negative regulatory element (NRE) 5'-AATTCCTCTGA-3' to mediate transcriptional repression of certain NK-kappa-B responsive genes. The polypeptide is NF-kappa-B-repressing factor (Homo sapiens (Human)).